Here is a 226-residue protein sequence, read N- to C-terminus: uncharacterized protein (226 aa).

To L.innocua lin2408 and lin2600.

This is an uncharacterized protein from Listeria innocua serovar 6a (strain ATCC BAA-680 / CLIP 11262).